The chain runs to 183 residues: Ubiquitin carboxyl-terminal hydrolase 17-like protein 23 (183 aa).

A USP domain is found at alanine 80–valine 183.

This sequence belongs to the peptidase C19 family. USP17 subfamily.

The protein resides in the nucleus. The protein localises to the endoplasmic reticulum. This chain is Ubiquitin carboxyl-terminal hydrolase 17-like protein 23 (USP17L23), found in Homo sapiens (Human).